Consider the following 293-residue polypeptide: Tumor necrosis factor receptor superfamily member 13B (293 aa).

Topologically, residues 1-165 (MSGLGRSRRG…SADQVALVYS (165 aa)) are extracellular. TNFR-Cys repeat units follow at residues 33–67 (SCPE…AFCR) and 70–104 (SCRK…AYFC). 6 disulfide bridges follow: cysteine 34-cysteine 47, cysteine 50-cysteine 62, cysteine 54-cysteine 66, cysteine 71-cysteine 86, cysteine 89-cysteine 100, and cysteine 93-cysteine 104. The interval 115 to 146 (PPELRRQRSGEVENNSDNSGRYQGLEHRGSEA) is disordered. Positions 126–135 (VENNSDNSGR) are enriched in polar residues. Asparagine 128 carries N-linked (GlcNAc...) asparagine glycosylation. A helical; Signal-anchor for type III membrane protein transmembrane segment spans residues 166 to 186 (TLGLCLCAVLCCFLVAVACFL). At 187–293 (KKRGDPCSCQ…VPAQEGGPGA (107 aa)) the chain is on the cytoplasmic side. Positions 192–226 (PCSCQPRSRPRQSPAKSSQDHAMEAGSPVSTSPEP) are disordered.

Binds TRAF2, TRAF5 and TRAF6. Binds the NH2-terminal domain of CAMLG with its C-terminus. In terms of tissue distribution, highly expressed in spleen, thymus, small intestine and peripheral blood leukocytes. Expressed in resting B-cells and activated T-cells, but not in resting T-cells.

The protein resides in the membrane. Its function is as follows. Receptor for TNFSF13/APRIL and TNFSF13B/TALL1/BAFF/BLYS that binds both ligands with similar high affinity. Mediates calcineurin-dependent activation of NF-AT, as well as activation of NF-kappa-B and AP-1. Involved in the stimulation of B- and T-cell function and the regulation of humoral immunity. This Homo sapiens (Human) protein is Tumor necrosis factor receptor superfamily member 13B (TNFRSF13B).